A 390-amino-acid chain; its full sequence is Fer-related kinase 1 (390 aa).

An SH2 domain is found at 23–119; the sequence is YYHGMVPRQD…ASGAKIRRPM (97 aa). The region spanning 131–386 is the Protein kinase domain; that stretch reads IVANKKLGEG…SIHKKLREFY (256 aa). Residues 137–145 and K161 each bind ATP; that span reads LGEGAFGDV. D252 (proton acceptor) is an active-site residue.

This sequence belongs to the protein kinase superfamily. Tyr protein kinase family. Fes/fps subfamily. Interacts with hmp-2. Mn(2+) is required as a cofactor.

The protein localises to the nucleus. It localises to the cytoplasm. It is found in the cell junction. Its subcellular location is the cell membrane. It catalyses the reaction L-tyrosyl-[protein] + ATP = O-phospho-L-tyrosyl-[protein] + ADP + H(+). In terms of biological role, non-receptor tyrosine-protein kinase which plays a role in morphogenesis by regulating the epidermal enclosure of the embryo, independently of its kinase activity. Prevents hyperactivation of the Wnt signaling pathway during endoderm development, probably by preventing hmp-2 nuclear translocation. In Caenorhabditis elegans, this protein is Fer-related kinase 1.